Here is a 193-residue protein sequence, read N- to C-terminus: Ferredoxin-2, mitochondrial (193 aa).

Residues 38–70 form a disordered region; the sequence is QATPEKLETSNEEEGSSSAQITAGVESDAENQR. Residues 78 to 180 enclose the 2Fe-2S ferredoxin-type domain; sequence VEVVFLDRSG…GAEFTLPKIT (103 aa). Positions 115, 121, 124, and 161 each coordinate [2Fe-2S] cluster.

The protein belongs to the adrenodoxin/putidaredoxin family. Component of the mitochondrial core iron-sulfur cluster (ISC) complex composed of NFS1, LYRM4, NDUFAB1, ISCU, FXN, and FDX2; this complex is a heterohexamer containing two copies of each monomer. It depends on [2Fe-2S] cluster as a cofactor.

The protein localises to the mitochondrion. Its subcellular location is the mitochondrion matrix. In terms of biological role, electron donor, of the core iron-sulfur cluster (ISC) assembly complex, that acts to reduce the persulfide into sulfide during [2Fe-2S] clusters assembly on the scaffolding protein ISCU. The core iron-sulfur cluster (ISC) assembly complex is involved in the de novo synthesis of a [2Fe-2S] cluster, the first step of the mitochondrial iron-sulfur protein biogenesis. This process is initiated by the cysteine desulfurase complex (NFS1:LYRM4:NDUFAB1) that produces persulfide which is delivered on the scaffold protein ISCU in a FXN-dependent manner. Then this complex is stabilized by FDX2 which provides reducing equivalents to accomplish the [2Fe-2S] cluster assembly. Finally, the [2Fe-2S] cluster is transferred from ISCU to chaperone proteins, including HSCB, HSPA9 and GLRX5. Essential for coenzyme Q biosynthesis: together with FDXR, transfers the electrons required for the hydroxylation reaction performed by COQ6. The polypeptide is Ferredoxin-2, mitochondrial (Xenopus laevis (African clawed frog)).